The following is a 510-amino-acid chain: Proline--tRNA ligase (510 aa).

This sequence belongs to the class-II aminoacyl-tRNA synthetase family. ProS type 3 subfamily. In terms of assembly, homodimer.

It localises to the cytoplasm. It catalyses the reaction tRNA(Pro) + L-proline + ATP = L-prolyl-tRNA(Pro) + AMP + diphosphate. In terms of biological role, catalyzes the attachment of proline to tRNA(Pro) in a two-step reaction: proline is first activated by ATP to form Pro-AMP and then transferred to the acceptor end of tRNA(Pro). The sequence is that of Proline--tRNA ligase from Sphingomonas elodea.